Here is a 230-residue protein sequence, read N- to C-terminus: Orotidine 5'-phosphate decarboxylase (230 aa).

Residues Asp11, Lys34, 61–70, Thr117, Arg179, Gln188, Gly208, and Arg209 each bind substrate; that span reads DLKLHDIPNT. Lys63 serves as the catalytic Proton donor.

It belongs to the OMP decarboxylase family. Type 1 subfamily. As to quaternary structure, homodimer.

It catalyses the reaction orotidine 5'-phosphate + H(+) = UMP + CO2. It participates in pyrimidine metabolism; UMP biosynthesis via de novo pathway; UMP from orotate: step 2/2. Its function is as follows. Catalyzes the decarboxylation of orotidine 5'-monophosphate (OMP) to uridine 5'-monophosphate (UMP). This Streptococcus sanguinis (strain SK36) protein is Orotidine 5'-phosphate decarboxylase.